The chain runs to 216 residues: Adenylate kinase (216 aa).

Residue 10 to 15 (GAGKGT) participates in ATP binding. An NMP region spans residues 30 to 59 (STGDIFRYNIKQGTELGKKAKSYMDQGLLV). Residues Thr31, Arg36, 57 to 59 (LLV), 85 to 88 (GFPR), and Gln92 contribute to the AMP site. An LID region spans residues 126-163 (GRRICRECGATFHVQYNPSTKGALCDQCGGELYQRDDD). Residue Arg127 coordinates ATP. The Zn(2+) site is built by Cys130 and Cys133. 136–137 (TF) is an ATP binding site. Cys150 and Cys153 together coordinate Zn(2+). Positions 160 and 171 each coordinate AMP. Lys199 provides a ligand contact to ATP.

Belongs to the adenylate kinase family. Monomer.

It localises to the cytoplasm. It carries out the reaction AMP + ATP = 2 ADP. It participates in purine metabolism; AMP biosynthesis via salvage pathway; AMP from ADP: step 1/1. Catalyzes the reversible transfer of the terminal phosphate group between ATP and AMP. Plays an important role in cellular energy homeostasis and in adenine nucleotide metabolism. This chain is Adenylate kinase, found in Alkaliphilus oremlandii (strain OhILAs) (Clostridium oremlandii (strain OhILAs)).